Reading from the N-terminus, the 341-residue chain is HTH-type transcriptional repressor PurR (341 aa).

In terms of domain architecture, HTH lacI-type spans 2-56; that stretch reads ATIKDVAKRANVSTTTVSHVINKTRFVAEETRNAVWAAIKELHYSPSAVARSLKV. The segment at residues 4-23 is a DNA-binding region (H-T-H motif); the sequence is IKDVAKRANVSTTTVSHVIN. Residues 48–56 mediate DNA binding; sequence SAVARSLKV. Residues tyrosine 73, arginine 190, threonine 192, phenylalanine 221, and aspartate 275 each coordinate hypoxanthine.

In terms of assembly, homodimer.

It participates in purine metabolism; purine nucleotide biosynthesis [regulation]. Functionally, is the main repressor of the genes involved in the de novo synthesis of purine nucleotides, regulating purB, purC, purEK, purF, purHD, purL, purMN and guaBA expression. PurR is allosterically activated to bind its cognate DNA by binding the purine corepressors, hypoxanthine or guanine, thereby effecting transcription repression. This is HTH-type transcriptional repressor PurR from Klebsiella pneumoniae subsp. pneumoniae (strain ATCC 700721 / MGH 78578).